The chain runs to 876 residues: E3 ubiquitin-protein ligase TRIM71 (876 aa).

An RING-type zinc finger spans residues 12 to 90; the sequence is CPLCKEMCGS…ALKLRCPICD (79 aa). The span at 26–40 shows a compositional bias: low complexity; sequence SSNSSTSSSSSQTSG. 2 disordered regions span residues 26-46 and 128-192; these read SSNS…GGGG and KNGR…AALL. The span at 137–148 shows a compositional bias: gly residues; that stretch reads PAAGSGAGGGGA. Residues 160-182 show a composition bias toward low complexity; sequence RAAAAASSPAAGSAAPSASSSSS. The segment at 200–247 adopts a B box-type 1; atypical zinc-finger fold; sequence QGEPRCSSCDEGNAASSRCLDCQEHLCDNCVRAHQRVRLTKDHFIERF. 8 residues coordinate Zn(2+): Cys205, Cys208, Cys229, His233, Cys286, His289, Cys309, and His314. The B box-type 2 zinc-finger motif lies at 281–322; that stretch reads ERASYCQHHDDEVLHFYCDTCSVPICRECTMGRHVGHSFIYL. 2 coiled-coil regions span residues 344–373 and 399–434; these read RQAI…SEVK and QVKA…EEGR. One copy of the Filamin repeat lies at 487 to 588; that stretch reads SSGAFAPLTK…IENSPFKVVV (102 aa). NHL repeat units lie at residues 601 to 644, 648 to 691, 695 to 738, 742 to 785, 789 to 832, and 836 to 876; these read GLSF…FKPC, HHKF…FTFE, ILKF…FGPD, LNKY…IHAD, ARFL…FESN, and LCKF…ILVF.

Belongs to the TRIM/RBCC family.

It localises to the cytoplasm. The protein localises to the P-body. It catalyses the reaction S-ubiquitinyl-[E2 ubiquitin-conjugating enzyme]-L-cysteine + [acceptor protein]-L-lysine = [E2 ubiquitin-conjugating enzyme]-L-cysteine + N(6)-ubiquitinyl-[acceptor protein]-L-lysine.. It functions in the pathway protein modification; protein ubiquitination. E3 ubiquitin-protein ligase that cooperates with the microRNAs (miRNAs) machinery and promotes embryonic stem cells proliferation and maintenance. Binds to miRNAs and participates in post-transcriptional repression of transcripts. Required to maintain proliferation and prevent premature differentiation of neural progenitor cells during early neural development. The polypeptide is E3 ubiquitin-protein ligase TRIM71 (TRIM71) (Gallus gallus (Chicken)).